A 282-amino-acid chain; its full sequence is MKGSPFEKVALSDVSFTIPSGSFTAIIGHTGSGKSTLAQHFNGLLRPSKGTVRLGELEITADQKPPSLKEIRRKVGLVFQYPEHQLFEETVEKDICFGPMNYGVSEARAKKRAKELLHLVGLPDTYLQASPFSLSGGQMRRVAIAGVLAMEPDVLVLDEPTAGLDPEGQRLIMDMFYRLHQEKELTTVLVTHNMSDAAKFADQIIVMSQGNVAMTGDRQTVFARADELVALGLDVPETLQLLLQVKERFGLHDVPPLFSLEELADFLAKELQQKEGQPCSKI.

The ABC transporter domain occupies M1–D234. G28 to S35 is an ATP binding site.

Belongs to the ABC transporter superfamily. Energy-coupling factor EcfA family. As to quaternary structure, forms a stable energy-coupling factor (ECF) transporter complex composed of 2 membrane-embedded substrate-binding proteins (S component), 2 ATP-binding proteins (A component) and 2 transmembrane proteins (T component).

The protein localises to the cell membrane. ATP-binding (A) component of a common energy-coupling factor (ECF) ABC-transporter complex. Unlike classic ABC transporters this ECF transporter provides the energy necessary to transport a number of different substrates. This Halalkalibacterium halodurans (strain ATCC BAA-125 / DSM 18197 / FERM 7344 / JCM 9153 / C-125) (Bacillus halodurans) protein is Energy-coupling factor transporter ATP-binding protein EcfA2.